The sequence spans 142 residues: MDMVSPVLNLQSSILGELVGIIGKVFFLLIEEIKYPIITPKIIVDAQISSWSLFFFASICNLSAKFREPIVTTSSIISLMESEKDLKNVNEYFQIMAKMLFILENKIVVSLFVVFNISVLIIVKSEPYSYGKVLFKPSSSIF.

The Cytoplasmic portion of the chain corresponds to 1 to 9 (MDMVSPVLN). A helical transmembrane segment spans residues 10 to 30 (LQSSILGELVGIIGKVFFLLI). Topologically, residues 31–41 (EEIKYPIITPK) are extracellular. Residues 42–62 (IIVDAQISSWSLFFFASICNL) traverse the membrane as a helical segment. Residues 63–101 (SAKFREPIVTTSSIISLMESEKDLKNVNEYFQIMAKMLF) are Cytoplasmic-facing. The chain crosses the membrane as a helical span at residues 102–122 (ILENKIVVSLFVVFNISVLII). The Extracellular portion of the chain corresponds to 123–142 (VKSEPYSYGKVLFKPSSSIF).

It localises to the membrane. This is an uncharacterized protein from Saccharomyces cerevisiae (strain ATCC 204508 / S288c) (Baker's yeast).